An 892-amino-acid chain; its full sequence is Ataxin-7 (892 aa).

The segment covering 1 to 15 (MSERAADDVRGEPRR) has biased composition (basic and acidic residues). Disordered stretches follow at residues 1-74 (MSER…SAAA) and 195-247 (SKGG…SRVP). Over residues 16 to 38 (AAAAAGGAAAAAARQQQQQQQQQ) the composition is skewed to low complexity. The segment covering 39-55 (QPPPPQPQRQQHPPPPP) has biased composition (pro residues). The segment covering 195 to 222 (SKGGSASGSNRSSSGGVLSASSSSSKLL) has biased composition (low complexity). Lys257 is covalently cross-linked (Glycyl lysine isopeptide (Lys-Gly) (interchain with G-Cter in SUMO); alternate). A Glycyl lysine isopeptide (Lys-Gly) (interchain with G-Cter in SUMO2); alternate cross-link involves residue Lys257. Disordered regions lie at residues 298 to 328 (PTLP…NSNN), 389 to 505 (HKNK…ESVE), 616 to 730 (KSVP…SSHS), and 818 to 892 (SHGS…KARP). Composition is skewed to basic and acidic residues over residues 318 to 327 (LEKKPEDNSN) and 389 to 403 (HKNK…RHPD). One can recognise an SCA7 domain in the interval 334-401 (KRLSEREFDP…KTREKELIRH (68 aa)). Pro residues-rich tracts occupy residues 405-419 (QQPP…PAPP), 448-458 (HTPSLPRPPGC), and 468-483 (IDPP…PLPA). The segment covering 493 to 502 (EEGEGDDKEE) has biased composition (acidic residues). The segment covering 616–629 (KSVPAHGTTLNAQP) has biased composition (polar residues). Positions 640–669 (SMQSRQVSSSSSSPSTPSGLSSVPSSPMSR) are enriched in low complexity. Residues 670-680 (KPQKLKSSKSL) show a composition bias toward basic residues. The span at 685-695 (SSGNSTNCQNA) shows a compositional bias: polar residues. 2 stretches are compositionally biased toward low complexity: residues 716–730 (HSSS…SSHS) and 840–851 (SPSSSSINNSSS).

The protein belongs to the ataxin-7 family. As to quaternary structure, component of the SAGA transcription coactivator-HAT complex, at least composed of SUPT3H, GCN5L2, TAF5L, TAF6L, SUPT7L, TADA3L, TAD1L, TAF10, TAF12, TRRAP, TAF9 and ATXN7. The STAGA core complex is associated with a subcomplex required for histone deubiquitination composed of ATXN7L3, ENY2 and USP22. Interacts with SORBS1, PSMC1 and CRX. Interacts with TRRAP, GCN5L2 and TAF10. Interacts with alpha tubulin. Proteolytically cleaved by caspase-7 (CASP7). The cleavage may be involved in SCA7 degeneration: the isoform fragments may exert distinct toxic influences that could contribute to selective neurodegeneration. In terms of processing, sumoylation decreases the aggregation propensity and cellular toxicity of forms with an expanded poly-Gln region but has no effect on subcellular location or interaction with components of the STAGA complex. Isoform a is expressed in CNS, but is expressed predominantly in the peripherical tissues. In terms of tissue distribution, isoform b is expressed in CNS. Also highly expressed in the frontal lobe, skeletal muscle and spinal cord and is expressed at a lower level in the lung, lymphoblast and intestine.

It localises to the nucleus. The protein resides in the nucleolus. It is found in the nucleus matrix. The protein localises to the cytoplasm. Its subcellular location is the cytoskeleton. Acts as a component of the SAGA (aka STAGA) transcription coactivator-HAT complex. Mediates the interaction of SAGA complex with the CRX and is involved in CRX-dependent gene activation. Probably involved in tethering the deubiquitination module within the SAGA complex. Necessary for microtubule cytoskeleton stabilization. Involved in neurodegeneration. This is Ataxin-7 (ATXN7) from Homo sapiens (Human).